The primary structure comprises 78 residues: Acyl carrier protein (78 aa).

The Carrier domain maps to 1–76 (MAIHPKVKDI…DVASYLEKKG (76 aa)). The residue at position 36 (S36) is an O-(pantetheine 4'-phosphoryl)serine.

The protein belongs to the acyl carrier protein (ACP) family. Post-translationally, 4'-phosphopantetheine is transferred from CoA to a specific serine of apo-ACP by AcpS. This modification is essential for activity because fatty acids are bound in thioester linkage to the sulfhydryl of the prosthetic group.

Its subcellular location is the cytoplasm. It functions in the pathway lipid metabolism; fatty acid biosynthesis. Carrier of the growing fatty acid chain in fatty acid biosynthesis. In Bdellovibrio bacteriovorus (strain ATCC 15356 / DSM 50701 / NCIMB 9529 / HD100), this protein is Acyl carrier protein.